Here is a 442-residue protein sequence, read N- to C-terminus: MASSAHSDSASADASAEIPAEILAPAPWSTPADDSEHLRITAVRTFLTAPQGCPYVIVRVETNQPGLYGLGCASDPQRTLAIRSVVDDYYAPMLLGRDPSDIEDLHRLLFNSGYWRGGSIGQNALAGVDVALWDIKGKVAGLPLHQLLGGRAREAADAYTHVDGDNAGEIAEKVLAAHERGYRHVRVQVSVPGTDTYGTAPRDAAEARRRELRAGSWDSLAYLRHVPPVLREIRERVGTGVELLHDAHERLTPSQARELVHEVEDARLFFLEDALAPEDAAHFDQLRAAGSVPLAVGELYHDVMMYLPLLQRQVIDFARIRIPTLGGLTPTRKLVAAVELFGARTAPHGPGDVSPVGMAANLGLDLSSPAFGVQEAATFREATREVFPGTPVPERGRFHGTGLPGLGVDFDEAAARKYPVPEPLRHDRWALLRNGDGSVQRP.

Position 161 (His161) interacts with substrate. The Proton donor/acceptor role is filled by Tyr197. Asp246 serves as a coordination point for Mg(2+). His248 functions as the Proton donor/acceptor in the catalytic mechanism. Residues Glu272 and Glu298 each contribute to the Mg(2+) site. Substrate contacts are provided by Glu298, Arg319, His348, Asp352, and Glu375.

The protein belongs to the mandelate racemase/muconate lactonizing enzyme family. GalD subfamily. Mg(2+) serves as cofactor.

The catalysed reaction is D-mannonate = 2-dehydro-3-deoxy-D-gluconate + H2O. Functionally, has low D-mannonate dehydratase activity (in vitro), suggesting that this is not a physiological substrate and that it has no significant role in D-mannonate degradation in vivo. Has no detectable activity with a panel of 70 other acid sugars (in vitro). The polypeptide is D-galactonate dehydratase family member SSLG_02014 (Streptomyces sp. (strain SPB78)).